The primary structure comprises 436 residues: UDP-N-acetylmuramate--L-alanine ligase (436 aa).

An ATP-binding site is contributed by 110–116 (GAHGKTS).

The protein belongs to the MurCDEF family.

Its subcellular location is the cytoplasm. The enzyme catalyses UDP-N-acetyl-alpha-D-muramate + L-alanine + ATP = UDP-N-acetyl-alpha-D-muramoyl-L-alanine + ADP + phosphate + H(+). It functions in the pathway cell wall biogenesis; peptidoglycan biosynthesis. In terms of biological role, cell wall formation. This chain is UDP-N-acetylmuramate--L-alanine ligase, found in Lacticaseibacillus paracasei (strain ATCC 334 / BCRC 17002 / CCUG 31169 / CIP 107868 / KCTC 3260 / NRRL B-441) (Lactobacillus paracasei).